The primary structure comprises 82 residues: U10-myrmicitoxin-Mri1c (82 aa).

Residues 1 to 26 (MRLSYVSLTLAIIFVMAIVHAPETEA) form the signal peptide. Positions 27-52 (KAYPEADAVGEASAVGEADAVGVADP) are excised as a propeptide. I81 carries the post-translational modification Isoleucine amide.

The protein belongs to the formicidae venom precursor-01 superfamily. In terms of tissue distribution, expressed by the venom gland.

It is found in the secreted. In terms of biological role, induces paralysis 5 minutes after injection into blowflies (L.caesar). In most cases is not lethal 24 hours after injection, but paralysis is irreversible. May have antimicrobial properties, like most ant linear peptides. The protein is U10-myrmicitoxin-Mri1c of Manica rubida (European giant red ant).